Reading from the N-terminus, the 216-residue chain is Ras-like protein rasW (216 aa).

Position 16–23 (glycine 16–threonine 23) interacts with GTP. Residues tyrosine 38 to tyrosine 46 carry the Effector region motif. GTP is bound by residues aspartate 63–glutamine 67 and asparagine 122–aspartate 125. The segment at lysine 171–asparagine 193 is disordered. The segment covering arginine 172–lysine 189 has biased composition (basic and acidic residues). A Cysteine methyl ester modification is found at cysteine 213. Cysteine 213 carries S-geranylgeranyl cysteine lipidation. Positions lysine 214–methionine 216 are cleaved as a propeptide — removed in mature form.

Belongs to the small GTPase superfamily. Ras family.

The protein resides in the cell membrane. It carries out the reaction GTP + H2O = GDP + phosphate + H(+). Its function is as follows. Ras proteins bind GDP/GTP and possess intrinsic GTPase activity. The chain is Ras-like protein rasW (rasW) from Dictyostelium discoideum (Social amoeba).